Here is a 182-residue protein sequence, read N- to C-terminus: Functional amyloid subunit FapB (182 aa).

An N-terminal signal peptide occupies residues 1-18; that stretch reads MTHSWLLLTVLGCSAAMA. The FapB_R1 repeat unit spans residues 22–58; it reads NQALIDNAGKQYTGVLSVNQAAGNQHQQINSRAISLG. The stretch at 80–114 is one FapB_R2 repeat; sequence SAAIQGSAFSNGNGILGVNQSAGANNQMINAVRIS. The FapB_R3 repeat unit spans residues 150-180; the sequence is SDQAFTGSRGVVQVNQSAGVGNRMANTLGVT.

The protein belongs to the FapB/FapC family. Forms fibrils in vitro; in the presence of FapA the fibrils are slightly narrower. A minor component of purified amyloid fibrils. Fibrils are resistant to boiling in 2% (weight/vol) SDS and require &gt;90% (vol/vol) formic acid to dissolve.

The protein localises to the fimbrium. Its subcellular location is the secreted. Functionally, a minor component of the functional amyloid in this bacterium. Probably nucleates fibril formation; FapB nucleates fibrillation its own, FapA inhibits FapB fibril elongation. Upon overexpression of the endogenous six-gene locus (fapA-fapF) in situ, cells form large clumps during liquid growth, make large amounts of biofilm and produce amyloid fibrils. Expression of the 6 gene operon in E.coli strain BL21(DE3) induces flocculation and biofilm formation with copious extracellular fibrils. This Pseudomonas fluorescens protein is Functional amyloid subunit FapB.